The following is a 309-amino-acid chain: MILDNFFKNLIYEPVSVLGLLVFYFLLINLPISLGAVFKKKSSSAVRLITILVNLLITLQLLFRWSISGHFPISNLYESLYFLTWGITLGQLLVEREYQAPIIPSIAIPIELLTVAFACFVLPEDLKLSSNLVPALRSSWLVMHVSVVMLSYAALIIGSLLSMSVLFINKNKPLQIRSSSTGIGGFKLSNSYPVNDLVEPIEFSHSEELDTLSYRSILVGFVLLTLGLISGAVWANEAWGTWWSWDPKETWAFISWLFYAAYLHMRISKGWQGRKPALLASTGFLVVLVCYLGVNFLGIGLHSYGWIFG.

8 consecutive transmembrane segments (helical) span residues 18 to 38 (LGLL…GAVF), 48 to 68 (LITI…WSIS), 73 to 93 (ISNL…GQLL), 102 to 122 (IIPS…CFVL), 148 to 168 (VMLS…VLFI), 216 to 236 (SILV…VWAN), 250 to 267 (TWAF…HMRI), and 279 to 299 (LAST…FLGI).

It belongs to the CcmF/CycK/Ccl1/NrfE/CcsA family. In terms of assembly, may interact with ccs1.

The protein localises to the cellular thylakoid membrane. In terms of biological role, required during biogenesis of c-type cytochromes (cytochrome c6 and cytochrome f) at the step of heme attachment. The chain is Cytochrome c biogenesis protein CcsA from Prochlorococcus marinus (strain AS9601).